Reading from the N-terminus, the 185-residue chain is MKLKPVLYLLMLLGCLGLKSAHAATLAHGISASWHSFSQTWNEPQTFDPYIPSIIWHNRWTYDADKIDKYNERPWGAGGGVSHFDKKGNWNGIYLMAFKDSFNKWELISGYGWEKTWRPLRDPDFHLGLGYTAGVTMRDNWSYIPIPVLLPLASIGYEYVSFQMTYIPGTYNNGNVYFAWLRWQL.

The N-terminal stretch at Met-1 to Gly-14 is a signal peptide. Cys-15 carries N-palmitoyl cysteine lipidation. A lipid anchor (S-diacylglycerol cysteine) is attached at Cys-15. Residues His-57, Asp-100, and Ser-101 contribute to the active site.

This sequence belongs to the lipid A palmitoyltransferase family. As to quaternary structure, homodimer.

The protein resides in the cell outer membrane. The enzyme catalyses a lipid A + a 1,2-diacyl-sn-glycero-3-phosphocholine = a hepta-acyl lipid A + a 2-acyl-sn-glycero-3-phosphocholine. It carries out the reaction a lipid IVA + a 1,2-diacyl-sn-glycero-3-phosphocholine = a lipid IVB + a 2-acyl-sn-glycero-3-phosphocholine. It catalyses the reaction a lipid IIA + a 1,2-diacyl-sn-glycero-3-phosphocholine = a lipid IIB + a 2-acyl-sn-glycero-3-phosphocholine. Its function is as follows. Transfers a fatty acid residue from the sn-1 position of a phospholipid to the N-linked hydroxyfatty acid chain on the proximal unit of lipid A or its precursors. The sequence is that of Lipid A acyltransferase PagP from Erwinia pyrifoliae (strain DSM 12163 / CIP 106111 / Ep16/96).